Here is a 469-residue protein sequence, read N- to C-terminus: Protein nucleotidyltransferase YdiU (469 aa).

Residues G80, G82, R83, K103, D115, G116, R166, and R173 each contribute to the ATP site. D243 (proton acceptor) is an active-site residue. Mg(2+) contacts are provided by N244 and D253. D253 is a binding site for ATP.

The protein belongs to the SELO family. Requires Mg(2+) as cofactor. Mn(2+) serves as cofactor.

The catalysed reaction is L-seryl-[protein] + ATP = 3-O-(5'-adenylyl)-L-seryl-[protein] + diphosphate. It carries out the reaction L-threonyl-[protein] + ATP = 3-O-(5'-adenylyl)-L-threonyl-[protein] + diphosphate. The enzyme catalyses L-tyrosyl-[protein] + ATP = O-(5'-adenylyl)-L-tyrosyl-[protein] + diphosphate. It catalyses the reaction L-histidyl-[protein] + UTP = N(tele)-(5'-uridylyl)-L-histidyl-[protein] + diphosphate. The catalysed reaction is L-seryl-[protein] + UTP = O-(5'-uridylyl)-L-seryl-[protein] + diphosphate. It carries out the reaction L-tyrosyl-[protein] + UTP = O-(5'-uridylyl)-L-tyrosyl-[protein] + diphosphate. Its function is as follows. Nucleotidyltransferase involved in the post-translational modification of proteins. It can catalyze the addition of adenosine monophosphate (AMP) or uridine monophosphate (UMP) to a protein, resulting in modifications known as AMPylation and UMPylation. The protein is Protein nucleotidyltransferase YdiU of Pseudoalteromonas translucida (strain TAC 125).